A 402-amino-acid polypeptide reads, in one-letter code: Guanine nucleotide-binding protein subunit alpha-1 (402 aa).

Residues Met1 to Ser12 show a composition bias toward polar residues. The segment at Met1–Ala70 is disordered. Gly2 is lipidated: N-myristoyl glycine. A lipid anchor (S-palmitoyl cysteine) is attached at Cys3. A compositionally biased stretch (basic and acidic residues) spans Lys23 to Pro33. Over residues Glu34–Pro69 the composition is skewed to pro residues. In terms of domain architecture, G-alpha spans Glu82–Ala402. A G1 motif region spans residues Gly85–Thr98. GTP is bound by residues Glu93, Ser94, Gly95, Lys96, Thr97, Thr98, Asp198, Leu223, Ser229, Gly251, Asn317, Lys318, Asp320, and Ala377. Thr97 is a binding site for Mg(2+). Positions Asp221–Ser229 are G2 motif. Ser229 contributes to the Mg(2+) binding site. The segment at Ile244 to Lys253 is G3 motif. Positions Phe313 to Asp320 are G4 motif. Residues Ile375–Gly380 form a G5 motif region.

It belongs to the G-alpha family. As to quaternary structure, g proteins are composed of 3 units; alpha, beta and gamma. The alpha chain contains the guanine nucleotide binding site. Requires Mg(2+) as cofactor.

The protein resides in the cytoplasm. The protein localises to the perinuclear region. It localises to the endomembrane system. In terms of biological role, guanine nucleotide-binding proteins (G proteins) are involved as modulators or transducers in various transmembrane signaling systems. The protein is Guanine nucleotide-binding protein subunit alpha-1 (GA1) of Trichomonas vaginalis.